Consider the following 263-residue polypeptide: Proline rich transmembrane protein 1B (263 aa).

Residues 1 to 17 show a composition bias toward gly residues; it reads MEAGAGGAGSDTKGGGS. The disordered stretch occupies residues 1–107; it reads MEAGAGGAGS…IGFVGEPPPY (107 aa). Composition is skewed to low complexity over residues 37-47 and 75-86; these read QMPAQPALPQL and DAPAQAAGEAGP. Helical transmembrane passes span 190–210 and 238–258; these read MMES…IAIV and VLFS…YVVV.

Belongs to the CD225/Dispanin family.

It is found in the membrane. This Homo sapiens (Human) protein is Proline rich transmembrane protein 1B.